Consider the following 1061-residue polypeptide: MKFLLLSTFIFLYSSLALARDKHYFIGITEAVWDYASGTEEKKLISVDTEQSNFYLQNGPDRIGRKYKKALYFEYTDGTFSKTIDKPAWLGFLGPVIKAEVEDKVYVHLKNLASRIYTFHAHGVTYTKEYEGAVYPDNTTDFQRADDKVLPGQQYVYVLHANEPSPGEGDSNCVTRIYHSHVDAPKDIASGLIGPLILCKKGSLYKEKEKNIDQEFVLMFSVVDENLSWYLEDNIKTFCSEPEKVDKDNEDFQESNRMYSINGYTFGSLPGLSMCAADRVKWYLFGMGNEVDVHSAFFHGQALTSRNYQTDIINLFPATLIDAYMVAQNPGVWMLSCQNLNHLKAGLQAFFQVRDCNKPSPEDNIQDRHVRHYYIAAEEVIWNYAPSGTDIFTGENLTALESDSRVFFEQGATRIGGSYKKMAYREYTDGSFTNRKQRGPDEEHLGILGPVIWAEVGDTIKVTFHNKGQHPLSIQPMGVSFTAENEGTYYGPPGRSSQQAASHVAPKETFTYEWTVPKEMGPTYADPVCLSKMYYSGVDPTKDIFTGLIGPMKICKKGSLLADGRQKDVDKEFYLFPTVFDENESLLLDDNIRMFTTAPDQVDKEDEDFQESNKMHSMNGFMYGNQPGLNMCLGESIVWYLFSAGNEADVHGIYFSGNTYLSKGERRDTANLFPHKSLTLLMNPDTKGTFDVECLTTDHYTGGMKQKYTVNQCQRQFEDFTVYLGERTYYVAAVEVEWDYSPSRAWEKELHHLQEQNVSNVFLDKEEFFIGSKYKKVVYRQFTDSSFREQVKRRAEDEHLGILGPPIHANVGDKVKVVFKNMATRPYSIHAHGVKTESSTVVPTLPGEVRTYTWQIPERSGAGREDSACIPWAYYSTVDRVKDLYSGLIGPLIVCRKSYVKVFSPKKKMEFFLLFLVFDENESWYLDDNIKTYSEHPEKVNKDNEEFLESNKMHAINGKMFGNLQGLTMHVKDEVNWYVMGMGNEIDLHTVHFHGHSFQYKHRGVYSSDVFDLFPGTYQTLEMFPQTPGTWLLHCHVTDHVHAGMATTYTVLPVEQETKSG.

An N-terminal signal peptide occupies residues 1-19; it reads MKFLLLSTFIFLYSSLALA. Plastocyanin-like domains follow at residues 20 to 199, 208 to 356, 369 to 555, 565 to 713, 725 to 895, and 903 to 1057; these read RDKH…LILC, KEKN…VRDC, HVRH…MKIC, RQKD…VNQC, GERT…LIVC, and FSPK…VEQE. Y55, G64, and Y67 together coordinate Na(+). H120 and H122 together coordinate Cu(2+). H120 is an O2 binding site. A Ca(2+)-binding site is contributed by K128. N138 carries N-linked (GlcNAc...) asparagine glycosylation. Ca(2+)-binding residues include Q143, D146, and D147. C173 and C199 form a disulfide bridge. H179 and H181 together coordinate Cu(2+). Residue H179 coordinates O2. An N-linked (GlcNAc...) asparagine glycan is attached at N226. S255 contributes to the Na(+) binding site. Cysteines 275 and 356 form a disulfide. Residues H294, C337, and H342 each contribute to the Cu(2+) site. An N-linked (GlcNAc...) asparagine glycan is attached at N396. F407, G416, and Y419 together coordinate Na(+). The cysteines at positions 529 and 555 are disulfide-linked. N583 carries an N-linked (GlcNAc...) asparagine glycan. S612 is a binding site for Na(+). A disulfide bond links C632 and C713. The Cu(2+) site is built by H651, C694, H699, and M704. The active-site Nucleophile; for glutathione peroxidase activity is C694. An N-linked (GlcNAc...) asparagine glycan is attached at N757. Positions 762, 771, and 774 each coordinate Na(+). A disulfide bridge links C869 with C895. N921 carries N-linked (GlcNAc...) asparagine glycosylation. Residue S950 participates in Na(+) binding. Positions 989, 992, 994, 1034, 1035, 1036, 1040, and 1045 each coordinate Cu(2+). The O2 site is built by H992 and H994. H1036 contributes to the O2 binding site.

It belongs to the multicopper oxidase family. In terms of assembly, found in a complex with MPO and LTF; interacts directly with MPO and LTF, which allows Fe(3+) incorporation into LTF, activation of CP ferroxidase activity and protection of CP antioxidant properties by MPO. Requires Cu(2+) as cofactor. As to expression, expressed in many tissues, including liver, eye and brain.

It is found in the secreted. The catalysed reaction is 4 Fe(2+) + O2 + 4 H(+) = 4 Fe(3+) + 2 H2O. The enzyme catalyses 4 Cu(+) + O2 + 4 H(+) = 4 Cu(2+) + 2 H2O. It catalyses the reaction a hydroperoxide + 2 glutathione = an alcohol + glutathione disulfide + H2O. It carries out the reaction 4 nitric oxide + O2 + 2 H2O = 4 nitrite + 4 H(+). The catalysed reaction is 2 glutathione + H2O2 = glutathione disulfide + 2 H2O. Functionally, multifunctional blue, copper-binding (6-7 atoms per molecule) glycoprotein. It has ferroxidase activity oxidizing Fe(2+) to Fe(3+) without releasing radical oxygen species. It is involved in iron transport across the cell membrane. Copper ions provide a large number of enzymatic activites. Oxidizes highly toxic ferrous ions to the ferric state for further incorporation onto apo-transferrins, catalyzes Cu(+) oxidation and promotes the oxidation of biogenic amines such as norepinephrin and serotonin. Provides Cu(2+) ions for the ascorbate-mediated deaminase degradation of the heparan sulfate chains of GPC1. Has glutathione peroxidase-like activity, can remove both hydrogen peroxide and lipid hydroperoxide in the presence of thiols. Also shows NO-oxidase and NO2 synthase activities that determine endocrine NO homeostasis. In Mus musculus (Mouse), this protein is Ceruloplasmin (Cp).